We begin with the raw amino-acid sequence, 218 residues long: MDKSESTSAGRNRRRRPRRGSRSAPSSADANFRVLSQQLSRLNKTLAAGRPTINHPTFVGSERCRPGYTFTSITLKPPKIDRGSYYGKRLLLPDSVTEYDKKLVSRIQIRVNPLPKFDSTVWVTVRKVSASSDLSVAAISAMFADGASPVLVYQYAASGVQANNKLLYDLSAMRADIGDMRKYAVLVYSKDDALETDELVLHVDIEHQRIPTSGVLPV.

Methionine 1 is modified (N-acetylmethionine; by host). Residues 1–28 (MDKSESTSAGRNRRRRPRRGSRSAPSSA) form a disordered region. The span at 11–21 (RNRRRRPRRGS) shows a compositional bias: basic residues.

The protein belongs to the cucumovirus capsid protein family.

The protein localises to the virion. Functionally, capsid protein. Probably binds RNA and plays a role in packaging. The protein is Capsid protein of Cucumber mosaic virus (strain FC) (CMV).